The following is a 179-amino-acid chain: Large ribosomal subunit protein uL5 (179 aa).

The protein belongs to the universal ribosomal protein uL5 family. In terms of assembly, part of the 50S ribosomal subunit; contacts the 5S rRNA and probably tRNA. Forms a bridge to the 30S subunit in the 70S ribosome.

This is one of the proteins that bind and probably mediate the attachment of the 5S RNA into the large ribosomal subunit, where it forms part of the central protuberance. In the 70S ribosome it contacts protein S13 of the 30S subunit (bridge B1b), connecting the 2 subunits; this bridge is implicated in subunit movement. May contact the P site tRNA; the 5S rRNA and some of its associated proteins might help stabilize positioning of ribosome-bound tRNAs. The polypeptide is Large ribosomal subunit protein uL5 (Pyrobaculum aerophilum (strain ATCC 51768 / DSM 7523 / JCM 9630 / CIP 104966 / NBRC 100827 / IM2)).